Consider the following 365-residue polypeptide: 2-aminoethylphosphonate--pyruvate transaminase (365 aa).

Position 194 is an N6-(pyridoxal phosphate)lysine (Lys-194).

It belongs to the class-V pyridoxal-phosphate-dependent aminotransferase family. PhnW subfamily. As to quaternary structure, homodimer. Pyridoxal 5'-phosphate serves as cofactor.

The catalysed reaction is (2-aminoethyl)phosphonate + pyruvate = phosphonoacetaldehyde + L-alanine. Its function is as follows. Involved in phosphonate degradation. The chain is 2-aminoethylphosphonate--pyruvate transaminase from Bacillus mycoides (strain KBAB4) (Bacillus weihenstephanensis).